The following is an 849-amino-acid chain: Disks large homolog 3 (849 aa).

Residues 32–101 form a disordered region; it reads DWQVPDPYGP…GKSTPKLNGS (70 aa). Residues 41 to 53 are compositionally biased toward gly residues; the sequence is PSGGNGASSGYGG. Over residues 57–69 the composition is skewed to polar residues; sequence QTLPSQAGATPTP. 3 consecutive PDZ domains span residues 149–235, 244–330, and 404–484; these read EIVL…VRRR, EVNL…VAKP, and KIIL…AQYR. Ser157 carries the phosphoserine modification. Residues 519-589 form the SH3 domain; sequence KRSLYVRALF…PSKKRVEKKE (71 aa). Residues 659–834 form the Guanylate kinase-like domain; the sequence is ARPVIILGPM…IYNKIKQIIE (176 aa). The residue at position 705 (Tyr705) is a Phosphotyrosine.

This sequence belongs to the MAGUK family. Interacts through its PDZ domains with NETO1, GRIN2B, SYNGAP1 and APC. Interacts through its first two PDZ domains with ERBB4. Interacts through its third PDZ domain with NLGN1, and probably with NLGN2 and NLGN3. Interacts through its guanylate kinase-like domain with DLGAP1, DLGAP2, DLGAP3 and DLGAP4. Interacts with FRMPD4 (via C-terminus). Interacts with LRFN1, LRFN2 and LRFN4. Interacts with FLTP. Interacts with GPR85. Interacts with DGKI (via PDZ-binding motif).

Required for learning most likely through its role in synaptic plasticity following NMDA receptor signaling. The protein is Disks large homolog 3 (Dlg3) of Mus musculus (Mouse).